Reading from the N-terminus, the 262-residue chain is Type III pantothenate kinase (262 aa).

9-16 (DSGNTRVK) is an ATP binding site. Residues Tyr93 and 100 to 103 (GSDR) each bind substrate. Catalysis depends on Asp102, which acts as the Proton acceptor. Residue Asp122 coordinates K(+). Thr125 is a binding site for ATP. Residue Thr175 coordinates substrate.

The protein belongs to the type III pantothenate kinase family. Homodimer. NH4(+) serves as cofactor. It depends on K(+) as a cofactor.

It localises to the cytoplasm. The enzyme catalyses (R)-pantothenate + ATP = (R)-4'-phosphopantothenate + ADP + H(+). Its pathway is cofactor biosynthesis; coenzyme A biosynthesis; CoA from (R)-pantothenate: step 1/5. Functionally, catalyzes the phosphorylation of pantothenate (Pan), the first step in CoA biosynthesis. This Nitrosospira multiformis (strain ATCC 25196 / NCIMB 11849 / C 71) protein is Type III pantothenate kinase.